A 78-amino-acid chain; its full sequence is Small ribosomal subunit protein bS20 (78 aa).

The tract at residues 1–34 (MANIKSNLKRNKQNRARHTVVHSQTSAVKTQIKK) is disordered. Basic residues predominate over residues 7–20 (NLKRNKQNRARHTV). The span at 21 to 34 (VHSQTSAVKTQIKK) shows a compositional bias: polar residues.

Belongs to the bacterial ribosomal protein bS20 family.

In terms of biological role, binds directly to 16S ribosomal RNA. The protein is Small ribosomal subunit protein bS20 of Malacoplasma penetrans (strain HF-2) (Mycoplasma penetrans).